We begin with the raw amino-acid sequence, 341 residues long: Glycerol-3-phosphate dehydrogenase [NAD(P)+] (341 aa).

The NADPH site is built by S14, F15, R35, and K108. K108 and G136 together coordinate sn-glycerol 3-phosphate. Position 140 (A140) interacts with NADPH. Residues K191, D244, S254, R255, and N256 each contribute to the sn-glycerol 3-phosphate site. K191 functions as the Proton acceptor in the catalytic mechanism. NADPH is bound at residue R255. Residues V279 and E281 each coordinate NADPH.

This sequence belongs to the NAD-dependent glycerol-3-phosphate dehydrogenase family.

It is found in the cytoplasm. It catalyses the reaction sn-glycerol 3-phosphate + NAD(+) = dihydroxyacetone phosphate + NADH + H(+). It carries out the reaction sn-glycerol 3-phosphate + NADP(+) = dihydroxyacetone phosphate + NADPH + H(+). Its pathway is membrane lipid metabolism; glycerophospholipid metabolism. Catalyzes the reduction of the glycolytic intermediate dihydroxyacetone phosphate (DHAP) to sn-glycerol 3-phosphate (G3P), the key precursor for phospholipid synthesis. In Pseudomonas putida (strain ATCC 700007 / DSM 6899 / JCM 31910 / BCRC 17059 / LMG 24140 / F1), this protein is Glycerol-3-phosphate dehydrogenase [NAD(P)+].